The following is a 511-amino-acid chain: MSIYSKFTINDVLLNKESLQKKNKYTCPICFELIYKKSIYQCSSGHYACQECWEKSLEIKQECMICRCKVKSFKNLSRCLVIEQNFSKKECNCIYSFHLDYFIDGANQENEDEENEDEENEDDEDENEDEENGEDDEDKDEDEENENENEENKDEENEKRKLIKDEENGCKEIINVDQLDRHIQNCKFKFVKCSHIGCDRVLRLNSLKEHENQCGFKLVKCEYCACDGIIQVQLENHYDECPKFVIGCPQGCLNFFERDQIKSHIENDCNNSTIQCKYYEYGCKVEMKRSELQRHLENVNHQLFMGKLIDKLSSTLDQSMKIQELLLKEIEKSKITCSELQRKNDELSSLITEIDDNYFNKNDFINSWKLTSQGYTNKWIISNYSNLVENTPHPEYIYSPSFDIVSREFVISIYPNGSLTGKDHLSLFLHNNNEDPNKLEFTLELVNLLDKSKSITRKGLEVFEEIERKGWSKFLASKLINKKNGWLSDDDKLTINIYVKILYDDIEPLES.

An RING-type; degenerate zinc finger spans residues 27–67; the sequence is CPICFELIYKKSIYQCSSGHYACQECWEKSLEIKQECMICR. Positions 103 to 169 form a coiled coil; that stretch reads IDGANQENED…RKLIKDEENG (67 aa). The interval 107-159 is disordered; the sequence is NQENEDEENEDEENEDDEDENEDEENGEDDEDKDEDEENENENEENKDEENEK. The segment covering 109–155 has biased composition (acidic residues); that stretch reads ENEDEENEDEENEDDEDENEDEENGEDDEDKDEDEENENENEENKDE. 2 consecutive TRAF-type zinc fingers follow at residues 181–234 and 236–293; these read RHIQ…QVQL and NHYD…SELQ. The stretch at 324-358 forms a coiled coil; the sequence is ELLLKEIEKSKITCSELQRKNDELSSLITEIDDNY. The MATH domain occupies 374–499; it reads GYTNKWIISN…DDKLTINIYV (126 aa).

This sequence belongs to the TNF receptor-associated factor family. A subfamily.

Its subcellular location is the cytoplasm. Probable adapter protein and signal transducer that links members of the tumor necrosis factor receptor family to different signaling pathways by association with the receptor cytoplasmic domain and kinases. This is TNF receptor-associated factor family protein DDB_G0290931 from Dictyostelium discoideum (Social amoeba).